The following is a 344-amino-acid chain: Heat-inducible transcription repressor HrcA (344 aa).

The protein belongs to the HrcA family.

Its function is as follows. Negative regulator of class I heat shock genes (grpE-dnaK-dnaJ and groELS operons). Prevents heat-shock induction of these operons. The chain is Heat-inducible transcription repressor HrcA from Streptococcus pyogenes serotype M1.